Here is a 255-residue protein sequence, read N- to C-terminus: MAVISMKQLLEAGVHFGHQTRRWNPKMAKYIFTERNGIHVIDLQQTVKLADQAYEFVRDAAANDAVILFVGTKKQAAEAVADEATRAGQYFINHRWLGGTLTNWGTIQKRIARLKEIKRMEEEGTFDVLPKKEVALLNKQRARLEKFLGGIEDMPRIPDVMYVVDPHKEQIAVKEAKKLGIPVVAMVDTNADPDDIDIIIPANDDAIRAVKLITAKLADAIIEGRQGEDADVAFEADTQADSIEEIVEVVEGDNA.

Belongs to the universal ribosomal protein uS2 family.

The chain is Small ribosomal subunit protein uS2 (rpsB) from Streptococcus pyogenes serotype M1.